We begin with the raw amino-acid sequence, 493 residues long: Galactose-1-phosphate uridylyltransferase (493 aa).

This sequence belongs to the galactose-1-phosphate uridylyltransferase type 2 family.

It localises to the cytoplasm. The enzyme catalyses alpha-D-galactose 1-phosphate + UDP-alpha-D-glucose = alpha-D-glucose 1-phosphate + UDP-alpha-D-galactose. Its pathway is carbohydrate metabolism; galactose metabolism. The chain is Galactose-1-phosphate uridylyltransferase from Streptococcus pneumoniae (strain CGSP14).